Reading from the N-terminus, the 147-residue chain is Cyclic di-AMP receptor B (147 aa).

The CBS domain maps to 18-78 (MIEADKVAHV…SIFGLERIEF (61 aa)). Positions 23, 25, 46, 47, and 131 each coordinate 3',3'-c-di-AMP.

Homodimer. Forms a homodimer with a parallel, head-to-head assembly of the monomers. Under conditions of potassium starvation and corresponding low c-di-AMP levels, apo-DarB specifically interacts with the N-terminal region of the RelA. Under the same conditions, apo-DarB also specifically interacts with the C-terminal part of the pyruvate carboxylase.

Binds c-di-AMP. Binding of c-di-AMP to DarB inhibits the interaction with RelA and PYC. In terms of biological role, involved in the c-di-AMP-dependent regulation of the bacterial stringent response. Modulates the activities of at least two enzymes under conditions of potassium limitation. Apo-DarB regulates the activity of the GTP pyrophosphokinase RelA by interacting directly with RelA, leading to stimulation of (p)ppGpp synthesis and induction of the stringent response. Apo-DarB also regulates pyruvate carboxylase (PYC) at two levels: directly at the protein level by binding to the enzyme and stimulating the synthesis of oxaloacetate and indirectly, by interaction with RelA, which leads to activation of the stringent response and to the increased expression of the pycA gene. Stimulation of these enzymes by DarB is prevented in the presence of cyclic di-AMP (c-di-AMP). This is Cyclic di-AMP receptor B from Bacillus subtilis (strain 168).